A 236-amino-acid chain; its full sequence is Leucyl/phenylalanyl-tRNA--protein transferase (236 aa).

Belongs to the L/F-transferase family.

It is found in the cytoplasm. It catalyses the reaction N-terminal L-lysyl-[protein] + L-leucyl-tRNA(Leu) = N-terminal L-leucyl-L-lysyl-[protein] + tRNA(Leu) + H(+). The enzyme catalyses N-terminal L-arginyl-[protein] + L-leucyl-tRNA(Leu) = N-terminal L-leucyl-L-arginyl-[protein] + tRNA(Leu) + H(+). It carries out the reaction L-phenylalanyl-tRNA(Phe) + an N-terminal L-alpha-aminoacyl-[protein] = an N-terminal L-phenylalanyl-L-alpha-aminoacyl-[protein] + tRNA(Phe). Its function is as follows. Functions in the N-end rule pathway of protein degradation where it conjugates Leu, Phe and, less efficiently, Met from aminoacyl-tRNAs to the N-termini of proteins containing an N-terminal arginine or lysine. This Idiomarina loihiensis (strain ATCC BAA-735 / DSM 15497 / L2-TR) protein is Leucyl/phenylalanyl-tRNA--protein transferase.